The chain runs to 417 residues: Voltage-gated ClC-type chloride channel ClcB (417 aa).

11 helical membrane-spanning segments follow: residues 5–25, 54–74, 146–166, 168–188, 190–210, 222–242, 258–278, 288–308, 316–336, 339–359, and 380–400; these read LLIATIIGILAALAVAGFRHA, LITPAVGGLAAGALLWGWQKM, LWIACGAAAGMASAYHAPLAG, LFIAEILFGTLMLASLGPVVI, AVVALLTTHLLSGGNALLYTV, AMIISTGLVAGVCGPLFMWLM, WQLALGGFIVGLLSLLTPAVW, FLLSPPLLSVIAGIFICKLLA, GAPGGVFTPTLFIGLSIGMLY, MWGFWLPGADEMAILLGLTGM, and MTGEYRLLPGLLIACVVASVL.

The protein belongs to the chloride channel (TC 2.A.49) family. ClcB subfamily.

The protein resides in the cell inner membrane. Functionally, probably acts as an electrical shunt for an outwardly-directed proton pump that is linked to amino acid decarboxylation, as part of the extreme acid resistance (XAR) response. The chain is Voltage-gated ClC-type chloride channel ClcB from Citrobacter koseri (strain ATCC BAA-895 / CDC 4225-83 / SGSC4696).